The sequence spans 375 residues: RNA exonuclease 4 (375 aa).

A disordered region spans residues 21–78 (KTLGSDASSSSASSSTNNRRKLSTSESTKPKRTRLDAKEKDAEGSKSCSPAPTSLPWF). Low complexity predominate over residues 25–35 (SDASSSSASSS). Residues 53–64 (TRLDAKEKDAEG) show a composition bias toward basic and acidic residues. In terms of domain architecture, Exonuclease spans 134–297 (NYLAIDCEMV…FRSQKPKWDE (164 aa)).

This sequence belongs to the REXO4 family.

The protein resides in the nucleus. In terms of biological role, exoribonuclease involved in ribosome biosynthesis. Involved in the processing of ITS1, the internal transcribed spacer localized between the 18S and 5.8S rRNAs. The protein is RNA exonuclease 4 (REX4) of Mycosarcoma maydis (Corn smut fungus).